A 206-amino-acid chain; its full sequence is MVSGSGICAKEVVVDARHHMLGRLASILAKELLHGQRVVVVRCEEICMSGGLVRQKMKYLRFLRKRMNTKPSHGPIHFRAPSRILWRTIRGMIPHKTKRGAAALATLRAFEGVPPPYDRKKRMVIPDALKVLRLQPGHKYCLLGRLSKEVGWHHFDTITELEEKRKAKAQVSYERRKQLAKLRSKAVELAEKQLAPEMELLASLKY.

The protein belongs to the universal ribosomal protein uL13 family.

This is Large ribosomal subunit protein uL13 (RPL13A) from Picea mariana (Black spruce).